The sequence spans 144 residues: Mannitol-specific phosphotransferase enzyme IIA component (144 aa).

The 140-residue stretch at 3–142 (ELFSNDNIFL…EEIKQVFEEA (140 aa)) folds into the PTS EIIA type-2 domain. The active-site Tele-phosphohistidine intermediate is the histidine 63. Histidine 63 bears the Phosphohistidine; by HPr mark.

Homodimer or homotrimer. Seems to be a monomer when not phosphorylated.

It localises to the cytoplasm. The phosphoenolpyruvate-dependent sugar phosphotransferase system (sugar PTS), a major carbohydrate active transport system, catalyzes the phosphorylation of incoming sugar substrates concomitantly with their translocation across the cell membrane. The enzyme II CmtAB PTS system is involved in D-mannitol transport. This Staphylococcus aureus (strain MRSA252) protein is Mannitol-specific phosphotransferase enzyme IIA component (mtlF).